Here is a 146-residue protein sequence, read N- to C-terminus: Probable trivalent organoarsenical cleaving enzyme (146 aa).

A VOC domain is found at 2–118 (KYVHVGVNVV…DGNEWEFFYT (117 aa)). Fe(2+) is bound by residues histidine 5 and histidine 62. Cysteine 95 and cysteine 96 together coordinate roxarsone (III). Glutamate 114 serves as a coordination point for Fe(2+).

This sequence to M.tuberculosis Rv2641. Fe(2+) serves as cofactor.

The catalysed reaction is methylarsonous acid + AH2 + O2 = arsenite + methanol + A + H(+). It catalyses the reaction roxarsone (III) + AH2 + O2 = 4-hydroxy-3-nitrocyclohexa-2,5-dien-1-one + arsenite + A + H(+). It carries out the reaction nitarsone (III) + AH2 + O2 = 4-nitrocyclohexa-2,5-dien-1-one + arsenite + A + H(+). The enzyme catalyses 4-aminophenylarsonous acid + AH2 + O2 = 4-aminocyclohexa-2,5-dien-1-one + arsenite + A. Functionally, nonheme iron-dependent dioxygenase that can break carbon-arsenic bonds, playing a role in the detoxification of environmental organoarsenical compounds. Catalyzes the oxygen-dependent demethylation of highly toxic methylarsonous acid (MAs(III)) to arsenite, which can then be exported out of the cell. Can also cleave the C-As bond in several trivalent aromatic arsenicals, including roxarsone (III), nitarsone (III) and (4-aminophenyl)arsonous acid. Organoarsenical degradation by this enzyme is proposed to have a significant impact on the arsenic biogeocycle that maintains a balance between organic and inorganic species. In Bacillus subtilis (strain 168), this protein is Probable trivalent organoarsenical cleaving enzyme (yqcK).